Consider the following 167-residue polypeptide: Large ribosomal subunit protein uL22 (167 aa).

The segment at 120–167 (GSTATTVEDEAPKAKGAKGAKAKKAPAKKAAAKKAPAKKFAGKKTAKR) is disordered. The segment covering 134–167 (KGAKGAKAKKAPAKKAAAKKAPAKKFAGKKTAKR) has biased composition (basic residues).

Belongs to the universal ribosomal protein uL22 family. In terms of assembly, part of the 50S ribosomal subunit.

In terms of biological role, this protein binds specifically to 23S rRNA; its binding is stimulated by other ribosomal proteins, e.g. L4, L17, and L20. It is important during the early stages of 50S assembly. It makes multiple contacts with different domains of the 23S rRNA in the assembled 50S subunit and ribosome. Functionally, the globular domain of the protein is located near the polypeptide exit tunnel on the outside of the subunit, while an extended beta-hairpin is found that lines the wall of the exit tunnel in the center of the 70S ribosome. The sequence is that of Large ribosomal subunit protein uL22 from Koribacter versatilis (strain Ellin345).